The following is an 861-amino-acid chain: Oleate activated transcription factor 3 (861 aa).

The zn(2)-C6 fungal-type DNA-binding region spans 19 to 47 (NCKKRKSKCDRTKPCGTCVRLGDVDSCVY). Residues 52–61 (SGQPESSPSL) show a composition bias toward polar residues. The interval 52-99 (SGQPESSPSLNDADPLRKQSTPAERISPGFIKKRRSSQTRQDEDHWQR) is disordered.

It belongs to the OAF3 family.

The protein resides in the cytoplasm. Its subcellular location is the nucleus. It localises to the mitochondrion. In terms of biological role, transcriptional inhibitor with a significantly increased number of target genes in response to oleate. This Saccharomyces cerevisiae (strain JAY291) (Baker's yeast) protein is Oleate activated transcription factor 3 (OAF3).